The following is a 153-amino-acid chain: Endoribonuclease YbeY (153 aa).

Residues His-114, His-118, and His-124 each contribute to the Zn(2+) site.

Belongs to the endoribonuclease YbeY family. Zn(2+) is required as a cofactor.

The protein resides in the cytoplasm. Functionally, single strand-specific metallo-endoribonuclease involved in late-stage 70S ribosome quality control and in maturation of the 3' terminus of the 16S rRNA. This is Endoribonuclease YbeY from Shewanella baltica (strain OS155 / ATCC BAA-1091).